The chain runs to 170 residues: E1B protein, small T-antigen (170 aa).

A disordered region spans residues Pro-137–Leu-170. Positions Arg-148–Glu-158 are enriched in acidic residues.

It belongs to the adenoviridae E1B 19 kDa protein family.

Its subcellular location is the host cell membrane. The protein resides in the host nucleus envelope. It localises to the host nucleus lamina. Putative adenovirus Bcl-2 homolog that inhibits apoptosis induced by TNF or FAS pathways, as well as p53-mediated apoptosis. Without E1B 19K function, virus production is compromised because of premature death of host cell. Interacts with Bax protein in cell lysates. This is E1B protein, small T-antigen from Homo sapiens (Human).